Here is a 426-residue protein sequence, read N- to C-terminus: Inositol hexakisphosphate kinase 2 (426 aa).

ATP is bound by residues 207 to 209 and Asp220; that span reads ENL. Substrate contacts are provided by residues Lys222 and 236-243; that span reads KAANQIRK. Asp383 is a binding site for ATP. His386 lines the substrate pocket.

This sequence belongs to the inositol phosphokinase (IPK) family.

The protein resides in the nucleus. It catalyses the reaction 1D-myo-inositol hexakisphosphate + ATP = 5-diphospho-1D-myo-inositol 1,2,3,4,6-pentakisphosphate + ADP. It functions in the pathway phospholipid metabolism; phosphatidylinositol metabolism. With respect to regulation, inhibited by flavonoids, including myricetin, quercetin, luteolin, isorhamnetin, rhamnetin, kaempferol, diosmetin and apigenin. Converts inositol hexakisphosphate (InsP6) to diphosphoinositol pentakisphosphate (InsP7/PP-InsP5). This chain is Inositol hexakisphosphate kinase 2, found in Homo sapiens (Human).